A 939-amino-acid chain; its full sequence is Valine--tRNA ligase (939 aa).

A 'HIGH' region motif is present at residues 47–57; it reads PNVTGILHMGH. A 'KMSKS' region motif is present at residues 563 to 567; that stretch reads KLSKS. ATP is bound at residue Lys566. Residues 874-939 adopt a coiled-coil conformation; that stretch reads EHLAKERVRL…QSILDKLASL (66 aa).

It belongs to the class-I aminoacyl-tRNA synthetase family. ValS type 1 subfamily. In terms of assembly, monomer.

The protein localises to the cytoplasm. The catalysed reaction is tRNA(Val) + L-valine + ATP = L-valyl-tRNA(Val) + AMP + diphosphate. Catalyzes the attachment of valine to tRNA(Val). As ValRS can inadvertently accommodate and process structurally similar amino acids such as threonine, to avoid such errors, it has a 'posttransfer' editing activity that hydrolyzes mischarged Thr-tRNA(Val) in a tRNA-dependent manner. In Chlamydia trachomatis serovar A (strain ATCC VR-571B / DSM 19440 / HAR-13), this protein is Valine--tRNA ligase.